The chain runs to 327 residues: Aspartate--ammonia ligase (327 aa).

Belongs to the class-II aminoacyl-tRNA synthetase family. AsnA subfamily.

It localises to the cytoplasm. It carries out the reaction L-aspartate + NH4(+) + ATP = L-asparagine + AMP + diphosphate + H(+). The protein operates within amino-acid biosynthesis; L-asparagine biosynthesis; L-asparagine from L-aspartate (ammonia route): step 1/1. This is Aspartate--ammonia ligase from Bacillus mycoides (strain KBAB4) (Bacillus weihenstephanensis).